The following is a 371-amino-acid chain: Chaperone protein DnaJ (371 aa).

The J domain occupies 5–69 (DYYEVLGLSK…QKRAQYDQFG (65 aa)). The CR-type zinc-finger motif lies at 133 to 215 (GKELNVEIPV…CHGSGKVRKR (83 aa)). Positions 146, 149, 163, 166, 189, 192, 203, and 206 each coordinate Zn(2+). CXXCXGXG motif repeat units lie at residues 146-153 (CDTCKGSG), 163-170 (CKHCSGSG), 189-196 (CGHCSGTG), and 203-210 (CTTCHGSG).

Belongs to the DnaJ family. Homodimer. It depends on Zn(2+) as a cofactor.

It localises to the cytoplasm. Functionally, participates actively in the response to hyperosmotic and heat shock by preventing the aggregation of stress-denatured proteins and by disaggregating proteins, also in an autonomous, DnaK-independent fashion. Unfolded proteins bind initially to DnaJ; upon interaction with the DnaJ-bound protein, DnaK hydrolyzes its bound ATP, resulting in the formation of a stable complex. GrpE releases ADP from DnaK; ATP binding to DnaK triggers the release of the substrate protein, thus completing the reaction cycle. Several rounds of ATP-dependent interactions between DnaJ, DnaK and GrpE are required for fully efficient folding. Also involved, together with DnaK and GrpE, in the DNA replication of plasmids through activation of initiation proteins. The protein is Chaperone protein DnaJ of Bacillus cereus (strain G9842).